We begin with the raw amino-acid sequence, 235 residues long: Calcium-activated potassium channel subunit beta-2 (235 aa).

Positions 1-45 are ball and chain; it reads MFIWTSGRTSSSYRHDEKRNIYQKIRDHDLLDKRKTVTALKAGED. Topologically, residues 1 to 46 are cytoplasmic; it reads MFIWTSGRTSSSYRHDEKRNIYQKIRDHDLLDKRKTVTALKAGEDR. A helical membrane pass occupies residues 47-67; the sequence is AILLGLAMMVCSIMMYFLLGI. Over 68-194 the chain is Extracellular; the sequence is TLLRSYMQSV…VILTKLYSSN (127 aa). N-linked (GlcNAc...) asparagine glycans are attached at residues Asn-88, Asn-96, and Asn-119. A helical transmembrane segment spans residues 195-215; the sequence is VLFHSLFWPTCMMAGGVAIVA. Over 216–235 the chain is Cytoplasmic; sequence MVKLTQYLSLLCERIQRINR.

This sequence belongs to the KCNMB (TC 8.A.14.1) family. KCNMB2 subfamily. In terms of assembly, interacts with KCNMA1 tetramer. There are probably 4 molecules of KCMNB2 per KCNMA1 tetramer. Post-translationally, N-glycosylated. Expressed in kidney, heart and brain. Highly expressed in ovary. Expressed at low level in other tissues.

It is found in the membrane. Functionally, regulatory subunit of the calcium activated potassium KCNMA1 (maxiK) channel. Modulates the calcium sensitivity and gating kinetics of KCNMA1, thereby contributing to KCNMA1 channel diversity. Acts as a negative regulator that confers rapid and complete inactivation of KCNMA1 channel complex. May participate in KCNMA1 inactivation in chromaffin cells of the adrenal gland or in hippocampal CA1 neurons. This chain is Calcium-activated potassium channel subunit beta-2 (KCNMB2), found in Homo sapiens (Human).